Consider the following 523-residue polypeptide: Chitinase Chi52 (523 aa).

A signal peptide spans 1–30 (MNQAVRFRPVITFALAFLLLITWFAPRADA). The disordered stretch occupies residues 80–101 (GSGGETPTPDTAPPSVPAGLTS). The Fibronectin type-III domain maps to 95–180 (VPAGLTSSSI…TSLSVTTSNG (86 aa)). The region spanning 190 to 513 (KWLIGYWHNF…SAHRPFLNGL (324 aa)) is the GH18 domain. Glutamate 302 functions as the Proton donor in the catalytic mechanism.

This sequence belongs to the glycosyl hydrolase 18 family. Chitinase class II subfamily.

The catalysed reaction is Random endo-hydrolysis of N-acetyl-beta-D-glucosaminide (1-&gt;4)-beta-linkages in chitin and chitodextrins.. Its activity is regulated as follows. Activity is inhibited by Cu(2+) and Co(2+), and almost completely inhibited by SDS. Acidic chitinase that displays a broad substrate specificity, showing the highest specific activity toward colloidal chitin, followed by ethylene glycol chitin and ball milled chitin, but exhibits no activity toward powdery chitin and chitosan. Hydrolyzes colloidal chitin and chitooligosaccharides with degree of polymerization 2-5 to release mainly N-acetyl chitobiose. Displays inhibition effects on the growth of some phytopathogenic fungi, including Alternaria alstroemeriae, Botrytis cinerea, Rhizoctonia solani, Sclerotinia sclerotiorum and Valsa mali. The polypeptide is Chitinase Chi52 (Paenibacillus xylanexedens).